Consider the following 319-residue polypeptide: Carbonic anhydrase, chloroplastic (319 aa).

The transit peptide at 1-98 (MSTINGCLTS…AASKVAQITS (98 aa)) directs the protein to the chloroplast.

Belongs to the beta-class carbonic anhydrase family. Homohexamer.

It is found in the plastid. Its subcellular location is the chloroplast stroma. The enzyme catalyses hydrogencarbonate + H(+) = CO2 + H2O. Functionally, reversible hydration of carbon dioxide. The chain is Carbonic anhydrase, chloroplastic from Spinacia oleracea (Spinach).